Here is a 293-residue protein sequence, read N- to C-terminus: Ribosomal RNA small subunit methyltransferase H (293 aa).

S-adenosyl-L-methionine is bound by residues Gly-34–His-36, Asp-54, Leu-86, Asp-101, and Gln-108.

Belongs to the methyltransferase superfamily. RsmH family.

The protein localises to the cytoplasm. It catalyses the reaction cytidine(1402) in 16S rRNA + S-adenosyl-L-methionine = N(4)-methylcytidine(1402) in 16S rRNA + S-adenosyl-L-homocysteine + H(+). Specifically methylates the N4 position of cytidine in position 1402 (C1402) of 16S rRNA. This Elusimicrobium minutum (strain Pei191) protein is Ribosomal RNA small subunit methyltransferase H.